The chain runs to 406 residues: MISLNSIFLLSLVGLSRAAPSRSETSPDRTIKPRAACTPTAGGSSSTDDVPAIQEAITSCGDGGIIIIPADTTYYLNSVLDFKGCSNCDFQVEGLLQFTSSTDYWNGKTAMITVSDIDGLKLRSVTGSGVIDGNGQESWDKFAEDSSYKRPTLLYITGGSNIEVSGLRQKNPPNVFISVKGDTSNAQFTSLTMDATSNSDNLPKNTDAFDIGASTYVTISSVAITNDDDCVAFKPGANYVTVENVSCTGSHGISVGSLGKSSDDTVQNVYARNITMINSSKAAGIKTYPSGGDHGLSTVKNATFEDFIVDGCDYAFQIQSCYGEDDTYCEENPGDAVLEGIVVKGFTGTTSDKEDPVVANLNCGSKGTCDVTISGFEVKAPSGDAKILCGNTPSDLGVTCSSGASG.

The N-terminal stretch at 1-18 (MISLNSIFLLSLVGLSRA) is a signal peptide. The disordered stretch occupies residues 20–49 (PSRSETSPDRTIKPRAACTPTAGGSSSTDD). 6 PbH1 repeats span residues 183–213 (TSNA…DIGA), 214–235 (STYV…AFKP), 237–257 (ANYV…SVGS), 266–289 (VQNV…KTYP), 299–320 (VKNA…QIQS), and 368–390 (TCDV…ILCG). The Proton donor role is filled by aspartate 228. Residue asparagine 244 is glycosylated (N-linked (GlcNAc...) asparagine). The active site involves histidine 251. Asparagine 273, asparagine 278, and asparagine 301 each carry an N-linked (GlcNAc...) asparagine glycan.

This sequence belongs to the glycosyl hydrolase 28 family.

Its subcellular location is the secreted. Pectinolytic enzyme involved in the degradation of xylogalacturonan (xga), a galacturonan backbone heavily substituted with xylose, and which is one important component of the hairy regions of pectin. Activity requires a galacturonic acid backbone substituted with xylose. The chain is Probable endo-xylogalacturonan hydrolase A (xghA) from Aspergillus oryzae (strain ATCC 42149 / RIB 40) (Yellow koji mold).